The following is a 624-amino-acid chain: Ubiquitin-associated and SH3 domain-containing protein A (624 aa).

The UBA domain maps to 19-60 (RSTPSLLDPLLAMGFPTHTALKALAATGRKTAEAAADWLHGH). The region spanning 238–303 (VHYQTLKALF…PENYTERANE (66 aa)) is the SH3 domain. The phosphatase-like stretch occupies residues 358-624 (RRGILVVRHG…FNWRNWISSN (267 aa)).

Homodimer or homooligomer. Interacts with CBL. Part of a complex containing CBL and activated EGFR. Interacts with ubiquitin and with mono-ubiquitinated proteins. Interacts with dynamin.

Its subcellular location is the cytoplasm. It is found in the nucleus. Interferes with CBL-mediated down-regulation and degradation of receptor-type tyrosine kinases. Promotes accumulation of activated target receptors, such as T-cell receptors, EGFR and PDGFRB, on the cell surface. May inhibit dynamin-dependent endocytic pathways by functionally sequestering dynamin via its SH3 domain. Exhibits negligible protein tyrosine phosphatase activity at neutral pH. May act as a dominant-negative regulator of UBASH3B-dependent dephosphorylation. This Mus musculus (Mouse) protein is Ubiquitin-associated and SH3 domain-containing protein A (Ubash3a).